A 530-amino-acid polypeptide reads, in one-letter code: Inactive ubiquitin carboxyl-terminal hydrolase 17-like protein 7 (530 aa).

One can recognise a USP domain in the interval 80-375 (AGLQKIGNTF…QAYVLFYIQK (296 aa)). Residues 382–392 (SESVSRGREPR) are compositionally biased toward basic and acidic residues. Disordered regions lie at residues 382-412 (SESV…KRDH), 431-454 (ESTL…NVRK), and 490-530 (SSTK…LVCQ). A compositionally biased stretch (polar residues) spans 490–512 (SSTKPTDQESMNTGTLASLQGST). The span at 513-524 (RRSKGNNKHSKR) shows a compositional bias: basic residues.

This sequence belongs to the peptidase C19 family. USP17 subfamily.

It is found in the nucleus. The protein resides in the endoplasmic reticulum. This Homo sapiens (Human) protein is Inactive ubiquitin carboxyl-terminal hydrolase 17-like protein 7 (USP17L7).